Reading from the N-terminus, the 457-residue chain is Adenylosuccinate synthetase (457 aa).

Residues 40–46 (GDEGKGK) and 70–72 (GHT) contribute to the GTP site. Catalysis depends on aspartate 41, which acts as the Proton acceptor. Mg(2+) is bound by residues aspartate 41 and glycine 70. IMP contacts are provided by residues 41-44 (DEGK), 68-71 (NAGH), threonine 161, arginine 175, asparagine 255, threonine 270, and arginine 334. Histidine 71 acts as the Proton donor in catalysis. 330-336 (VTTGRKR) contributes to the substrate binding site. GTP contacts are provided by residues arginine 336, 362-364 (KLD), and 444-446 (GVG).

This sequence belongs to the adenylosuccinate synthetase family. In terms of assembly, homodimer. Mg(2+) is required as a cofactor.

Its subcellular location is the cytoplasm. It catalyses the reaction IMP + L-aspartate + GTP = N(6)-(1,2-dicarboxyethyl)-AMP + GDP + phosphate + 2 H(+). It participates in purine metabolism; AMP biosynthesis via de novo pathway; AMP from IMP: step 1/2. Functionally, plays an important role in the de novo pathway and in the salvage pathway of purine nucleotide biosynthesis. Catalyzes the first committed step in the biosynthesis of AMP from IMP. The chain is Adenylosuccinate synthetase from Caenorhabditis elegans.